Reading from the N-terminus, the 461-residue chain is B3 domain-containing protein REM9 (461 aa).

The TF-B3 1 DNA-binding region spans 11 to 103 (NQHFFQPLLP…VFHVTALGPS (93 aa)). The interval 110–146 (PQSSRHEEGEESGENEISEKEGEENVQKESDKSSSDL) is disordered. Positions 126–143 (ISEKEGEENVQKESDKSS) are enriched in basic and acidic residues. DNA-binding regions (TF-B3) lie at residues 148 to 244 (CFSQ…CSRT) and 230 to 332 (LQKA…EQPS). Residues 333-415 (FKAEDGRHKR…SGIEGNLQHT (83 aa)) form a disordered region. Positions 384 to 394 (PKVEIREKIAE) are enriched in basic and acidic residues. Residues 400 to 415 (RASNKSSGIEGNLQHT) are compositionally biased toward polar residues.

The protein localises to the nucleus. This chain is B3 domain-containing protein REM9 (REM9), found in Arabidopsis thaliana (Mouse-ear cress).